Here is a 430-residue protein sequence, read N- to C-terminus: MNKLVHIIGAGLAGSEAAWQLVKNGFNVVIHEMKRVKKSPVHVSENFAELVCSNSLKSTDLKNAEGLLKAEMEIWGSLILECAYNNSVPAGKALAVDREKFSQCVTEKLLQTGLVKVVWEEVEKPYTDDIWIIATGPTTDGKLAEWIREQTGGFFNFFDAVAPIVSAESINMDVCFVADRYGVGTGDYINCPMTKEEYERFWNELVNAQVIEIEDFDRKLLFERCQPIEEIARSGKDAMRYGPLRPVGIVDPKTGKEPYAVIQLRKENVEGTMYNIVGFQTRLKWGEQRRIIQLIPGLENAEILRYGVMHRNSYIDSPKVLDEYLRLKKMPNVFFAGQITGVEGYVESAMTGLYVGLNISRLILGKDMIKFPEKTMCGALVRYITTAPELKPMYANFGLLGGGKDREKIALKALDEMKKFYQITSLTIGG.

9–14 (GAGLAG) serves as a coordination point for FAD.

It belongs to the MnmG family. TrmFO subfamily. It depends on FAD as a cofactor.

It is found in the cytoplasm. It carries out the reaction uridine(54) in tRNA + (6R)-5,10-methylene-5,6,7,8-tetrahydrofolate + NADH + H(+) = 5-methyluridine(54) in tRNA + (6S)-5,6,7,8-tetrahydrofolate + NAD(+). It catalyses the reaction uridine(54) in tRNA + (6R)-5,10-methylene-5,6,7,8-tetrahydrofolate + NADPH + H(+) = 5-methyluridine(54) in tRNA + (6S)-5,6,7,8-tetrahydrofolate + NADP(+). In terms of biological role, catalyzes the folate-dependent formation of 5-methyl-uridine at position 54 (M-5-U54) in all tRNAs. The protein is Methylenetetrahydrofolate--tRNA-(uracil-5-)-methyltransferase TrmFO of Fervidobacterium nodosum (strain ATCC 35602 / DSM 5306 / Rt17-B1).